Consider the following 194-residue polypeptide: Ion-translocating oxidoreductase complex subunit A (194 aa).

Helical transmembrane passes span 4-24, 39-59, 71-91, 102-122, 131-151, and 172-192; these read LVLI…QFLG, IGLS…SYLV, FLRT…TEMV, VLGI…VALL, FITA…VLVL, and AIGM…AGLI.

The protein belongs to the NqrDE/RnfAE family. As to quaternary structure, the complex is composed of six subunits: RnfA, RnfB, RnfC, RnfD, RnfE and RnfG.

It localises to the cell inner membrane. In terms of biological role, part of a membrane-bound complex that couples electron transfer with translocation of ions across the membrane. This Ectopseudomonas mendocina (strain ymp) (Pseudomonas mendocina) protein is Ion-translocating oxidoreductase complex subunit A.